Consider the following 634-residue polypeptide: Transcription termination factor FttA (634 aa).

The interval 4–69 (EEVLENIRKE…ISIRPDPSVL (66 aa)) is KHa. The KHb stretch occupies residues 70-137 (VEPEIAKQKI…WAPKPVRTPP (68 aa)). The metallo-beta-lactamase N-terminus stretch occupies residues 179 to 381 (WIRVSFLGGA…LIIESTYGAY (203 aa)). Residues His-240, His-242, Asp-244, His-245, His-327, and Asp-350 each coordinate Zn(2+). The beta-Casp stretch occupies residues 382-575 (DDVLPEREEA…LQVYTIEGFS (194 aa)). The metallo-beta-lactamase C-terminus stretch occupies residues 576–634 (GHSDRKQLIKYIRRLKPSPEKIIMVHGEESKCLDFADTVRRLFKKQTYVPMNLDAIRVK). His-601 serves as a coordination point for Zn(2+).

Belongs to the metallo-beta-lactamase superfamily. RNA-metabolizing metallo-beta-lactamase-like family. FttA subfamily. As to quaternary structure, homodimer. Interacts with RNA polymerase (RNAP), interacts with the Spt4-Spt5 complex. Zn(2+) is required as a cofactor.

Optimal NaCl concentration is 100 mM for nuclease activity on RNA. Functionally, terminates transcription on the whole genome. Termination is linked to FttA-mediated RNA cleavage and does not require NTP hydrolysis. Cleaves endonucleolytically at the RNA exit channel of RNA polymerase (RNAP); the 5'-3' exonuclease activity of this protein degrades the nascent RNA released from RNAP. An endoribonuclease with no apparent exonuclease activity, has low activity on single-stranded DNA (endodeoxyribonuclease, endoDNase). The chain is Transcription termination factor FttA from Methanocaldococcus jannaschii (strain ATCC 43067 / DSM 2661 / JAL-1 / JCM 10045 / NBRC 100440) (Methanococcus jannaschii).